A 179-amino-acid chain; its full sequence is Large ribosomal subunit protein uL6 (179 aa).

This sequence belongs to the universal ribosomal protein uL6 family. As to quaternary structure, part of the 50S ribosomal subunit.

In terms of biological role, this protein binds to the 23S rRNA, and is important in its secondary structure. It is located near the subunit interface in the base of the L7/L12 stalk, and near the tRNA binding site of the peptidyltransferase center. This Leptospira borgpetersenii serovar Hardjo-bovis (strain JB197) protein is Large ribosomal subunit protein uL6.